The chain runs to 253 residues: 5-oxoprolinase subunit A (253 aa).

It belongs to the LamB/PxpA family. In terms of assembly, forms a complex composed of PxpA, PxpB and PxpC.

The enzyme catalyses 5-oxo-L-proline + ATP + 2 H2O = L-glutamate + ADP + phosphate + H(+). In terms of biological role, catalyzes the cleavage of 5-oxoproline to form L-glutamate coupled to the hydrolysis of ATP to ADP and inorganic phosphate. The sequence is that of 5-oxoprolinase subunit A from Azorhizobium caulinodans (strain ATCC 43989 / DSM 5975 / JCM 20966 / LMG 6465 / NBRC 14845 / NCIMB 13405 / ORS 571).